The chain runs to 429 residues: C4-dicarboxylate transport protein (429 aa).

Transmembrane regions (helical) follow at residues 3-23 (VSIF…GVLL), 44-64 (LIKM…IAGM), 76-96 (IALL…LVVV), 144-164 (AFAS…GFAL), 184-204 (VIFG…FGAM), 222-242 (LILC…GTIA), 331-351 (TLLV…GSGF), and 352-372 (IVLA…LALI).

Belongs to the dicarboxylate/amino acid:cation symporter (DAACS) (TC 2.A.23) family.

Its subcellular location is the cell inner membrane. Responsible for the transport of dicarboxylates such as succinate, fumarate, and malate from the periplasm across the membrane. The polypeptide is C4-dicarboxylate transport protein (Yersinia pseudotuberculosis serotype O:1b (strain IP 31758)).